A 518-amino-acid polypeptide reads, in one-letter code: Xylose import ATP-binding protein XylG (518 aa).

2 ABC transporter domains span residues 6 to 245 and 262 to 507; these read LQMN…VGRE and FEAR…LSQP. 38 to 45 is an ATP binding site; sequence GENGAGKS.

This sequence belongs to the ABC transporter superfamily. Xylose importer (TC 3.A.1.2.4) family. As to quaternary structure, the complex is composed of two ATP-binding proteins (XylG), two transmembrane proteins (XylH) and a solute-binding protein (XylF).

It localises to the cell inner membrane. It carries out the reaction D-xylose(out) + ATP + H2O = D-xylose(in) + ADP + phosphate + H(+). Its function is as follows. Part of the ABC transporter complex XylFGH involved in xylose import. Responsible for energy coupling to the transport system. The sequence is that of Xylose import ATP-binding protein XylG from Pseudomonas fluorescens (strain Pf0-1).